The chain runs to 215 residues: Cytochrome b6 (215 aa).

The chain crosses the membrane as a helical span at residues I32–F52. A heme c-binding site is contributed by C35. 2 residues coordinate heme b: H86 and H100. 3 helical membrane-spanning segments follow: residues A90 to F110, L116 to Y136, and L186 to I206. H187 and H202 together coordinate heme b.

It belongs to the cytochrome b family. PetB subfamily. In terms of assembly, the 4 large subunits of the cytochrome b6-f complex are cytochrome b6, subunit IV (17 kDa polypeptide, PetD), cytochrome f and the Rieske protein, while the 4 small subunits are PetG, PetL, PetM and PetN. The complex functions as a dimer. Heme b is required as a cofactor. Heme c serves as cofactor.

It is found in the cellular thylakoid membrane. Component of the cytochrome b6-f complex, which mediates electron transfer between photosystem II (PSII) and photosystem I (PSI), cyclic electron flow around PSI, and state transitions. The protein is Cytochrome b6 of Synechococcus elongatus.